The sequence spans 358 residues: E3 ubiquitin-protein ligase RNF146 (358 aa).

An RING-type zinc finger spans residues 36-74; that stretch reads CAICLQTCVHPVSLPCKHVFCYLCVKGASWLGKRCALCR. Glycyl lysine isopeptide (Lys-Gly) (interchain with G-Cter in ubiquitin) cross-links involve residues K84 and K94. Residues 91–167 form the WWE domain; it reads EELKAASRGN…EHGRRRKIKR (77 aa). A glycoprotein is bound by residues Y107, R110, and W114. Residue K130 forms a Glycyl lysine isopeptide (Lys-Gly) (interchain with G-Cter in ubiquitin) linkage. The a glycoprotein site is built by Y144, Q153, R163, and K175. K175 is covalently cross-linked (Glycyl lysine isopeptide (Lys-Gly) (interchain with G-Cter in ubiquitin)). The segment at 253–358 is disordered; that stretch reads GDNTAERSHR…PDGQCTVTEV (106 aa). Over residues 283 to 297 the composition is skewed to acidic residues; it reads SIEETESDASSDSED. 2 positions are modified to phosphoserine: S289 and S293. Residues 305 to 322 are compositionally biased toward polar residues; that stretch reads HSLTQQRLLVSNANQTVP.

In terms of assembly, can form homooligomers. Interacts with PARsylated AXIN1, AXIN2, BLZF1, CASC3, H1-2, IPO7, LIG3, NCL, PARP1, XRCC1, XRCC5 and XRCC6. Interacts with DDB1, DHX15, IQGAP1, LRPPRC, PARP2, PRKDC, RUVBL2, TNKS1 and TNKS2. Binding often leads to interactor ubiquitination, in the presence of the appropriate E1 and E2 enzymes, and proteasomal degradation. In terms of processing, ubiquitinated; autoubiquitinated. Autoubiquitination is enhanced upon poly(ADP-ribose)-binding.

The protein resides in the cytoplasm. It is found in the cytosol. Its subcellular location is the nucleus. It catalyses the reaction S-ubiquitinyl-[E2 ubiquitin-conjugating enzyme]-L-cysteine + [acceptor protein]-L-lysine = [E2 ubiquitin-conjugating enzyme]-L-cysteine + N(6)-ubiquitinyl-[acceptor protein]-L-lysine.. Its pathway is protein modification; protein ubiquitination. E3 ubiquitin-protein ligase that specifically binds poly-ADP-ribosylated (PARsylated) proteins and mediates their ubiquitination and subsequent degradation. May regulate many important biological processes, such as cell survival and DNA damage response. Acts as an activator of the Wnt signaling pathway by mediating the ubiquitination of PARsylated AXIN1 and AXIN2, 2 key components of the beta-catenin destruction complex. Acts in cooperation with tankyrase proteins (TNKS and TNKS2), which mediate PARsylation of target proteins AXIN1, AXIN2, BLZF1, CASC3, TNKS and TNKS2. Recognizes and binds tankyrase-dependent PARsylated proteins via its WWE domain and mediates their ubiquitination, leading to their degradation. Different ubiquitin linkage types have been observed: TNKS2 undergoes ubiquitination at 'Lys-48' and 'Lys-63', while AXIN1 is only ubiquitinated at 'Lys-48'. May regulate TNKS and TNKS2 subcellular location, preventing aggregation at a centrosomal location. Neuroprotective protein. Protects the brain against N-methyl-D-aspartate (NMDA) receptor-mediated glutamate excitotoxicity and ischemia, by interfering with PAR-induced cell death, called parthanatos. Prevents nuclear translocation of AIFM1 in a PAR-binding dependent manner. Does not affect PARP1 activation. Protects against cell death induced by DNA damaging agents, such as N-methyl-N-nitro-N-nitrosoguanidine (MNNG) and rescues cells from G1 arrest. Promotes cell survival after gamma-irradiation. Facilitates DNA repair. This chain is E3 ubiquitin-protein ligase RNF146 (RNF146), found in Pongo abelii (Sumatran orangutan).